The primary structure comprises 607 residues: Aspartate--tRNA(Asp/Asn) ligase (607 aa).

E176 lines the L-aspartate pocket. The segment at 200-203 is aspartate; the sequence is QQFK. L-aspartate contacts are provided by R222 and H456. An ATP-binding site is contributed by 222-224; it reads RDE. E496 provides a ligand contact to ATP. Residue R503 participates in L-aspartate binding. 548–551 provides a ligand contact to ATP; sequence GIDR.

This sequence belongs to the class-II aminoacyl-tRNA synthetase family. Type 1 subfamily. Homodimer.

The protein resides in the cytoplasm. It carries out the reaction tRNA(Asx) + L-aspartate + ATP = L-aspartyl-tRNA(Asx) + AMP + diphosphate. Functionally, aspartyl-tRNA synthetase with relaxed tRNA specificity since it is able to aspartylate not only its cognate tRNA(Asp) but also tRNA(Asn). Reaction proceeds in two steps: L-aspartate is first activated by ATP to form Asp-AMP and then transferred to the acceptor end of tRNA(Asp/Asn). The sequence is that of Aspartate--tRNA(Asp/Asn) ligase from Parvibaculum lavamentivorans (strain DS-1 / DSM 13023 / NCIMB 13966).